Consider the following 89-residue polypeptide: Small ribosomal subunit protein uS14 (89 aa).

This sequence belongs to the universal ribosomal protein uS14 family. Part of the 30S ribosomal subunit. Contacts proteins S3 and S10.

In terms of biological role, binds 16S rRNA, required for the assembly of 30S particles and may also be responsible for determining the conformation of the 16S rRNA at the A site. The chain is Small ribosomal subunit protein uS14 from Streptococcus pneumoniae serotype 2 (strain D39 / NCTC 7466).